We begin with the raw amino-acid sequence, 102 residues long: Integration host factor subunit alpha (102 aa).

Belongs to the bacterial histone-like protein family. Heterodimer of an alpha and a beta chain.

Functionally, this protein is one of the two subunits of integration host factor, a specific DNA-binding protein that functions in genetic recombination as well as in transcriptional and translational control. This Paracoccus denitrificans (strain Pd 1222) protein is Integration host factor subunit alpha.